Here is a 428-residue protein sequence, read N- to C-terminus: D-inositol 3-phosphate glycosyltransferase (428 aa).

His17 is a 1D-myo-inositol 3-phosphate binding site. Residues 23 to 24 and Gly31 contribute to the UDP-N-acetyl-alpha-D-glucosamine site; that span reads QP. Residues 28 to 33, Arg86, Tyr119, Thr143, and Arg163 each bind 1D-myo-inositol 3-phosphate; that span reads DAGGMN. Residues Arg237 and Lys242 each coordinate UDP-N-acetyl-alpha-D-glucosamine. Positions 312, 313, and 315 each coordinate Mg(2+). UDP-N-acetyl-alpha-D-glucosamine contacts are provided by Glu325 and Glu333. Thr339 contacts Mg(2+).

This sequence belongs to the glycosyltransferase group 1 family. MshA subfamily. As to quaternary structure, homodimer.

It carries out the reaction 1D-myo-inositol 3-phosphate + UDP-N-acetyl-alpha-D-glucosamine = 1D-myo-inositol 2-acetamido-2-deoxy-alpha-D-glucopyranoside 3-phosphate + UDP + H(+). Its function is as follows. Catalyzes the transfer of a N-acetyl-glucosamine moiety to 1D-myo-inositol 3-phosphate to produce 1D-myo-inositol 2-acetamido-2-deoxy-glucopyranoside 3-phosphate in the mycothiol biosynthesis pathway. The sequence is that of D-inositol 3-phosphate glycosyltransferase from Thermobispora bispora (strain ATCC 19993 / DSM 43833 / CBS 139.67 / JCM 10125 / KCTC 9307 / NBRC 14880 / R51).